Reading from the N-terminus, the 152-residue chain is Regulatory protein RecX (152 aa).

Belongs to the RecX family.

Its subcellular location is the cytoplasm. Its function is as follows. Modulates RecA activity. In Haemophilus influenzae (strain PittGG), this protein is Regulatory protein RecX.